A 230-amino-acid chain; its full sequence is Sugar fermentation stimulation protein homolog (230 aa).

This sequence belongs to the SfsA family.

The polypeptide is Sugar fermentation stimulation protein homolog (Caldivirga maquilingensis (strain ATCC 700844 / DSM 13496 / JCM 10307 / IC-167)).